The following is a 129-amino-acid chain: Small ribosomal subunit protein uS11 (129 aa).

It belongs to the universal ribosomal protein uS11 family. Part of the 30S ribosomal subunit. Interacts with proteins S7 and S18. Binds to IF-3.

Functionally, located on the platform of the 30S subunit, it bridges several disparate RNA helices of the 16S rRNA. Forms part of the Shine-Dalgarno cleft in the 70S ribosome. The polypeptide is Small ribosomal subunit protein uS11 (Caulobacter sp. (strain K31)).